Reading from the N-terminus, the 476-residue chain is Ribulose bisphosphate carboxylase large chain (476 aa).

Residues 1 to 2 (MS) constitute a propeptide that is removed on maturation. Pro-3 carries the post-translational modification N-acetylproline. The residue at position 14 (Lys-14) is an N6,N6,N6-trimethyllysine. Positions 123 and 173 each coordinate substrate. Lys-175 (proton acceptor) is an active-site residue. Residue Lys-177 participates in substrate binding. The Mg(2+) site is built by Lys-201, Asp-203, and Glu-204. Lys-201 carries the N6-carboxylysine modification. His-294 functions as the Proton acceptor in the catalytic mechanism. Substrate-binding residues include Arg-295, His-327, and Ser-379.

It belongs to the RuBisCO large chain family. Type I subfamily. As to quaternary structure, heterohexadecamer of 8 large chains and 8 small chains; disulfide-linked. The disulfide link is formed within the large subunit homodimers. It depends on Mg(2+) as a cofactor. The disulfide bond which can form in the large chain dimeric partners within the hexadecamer appears to be associated with oxidative stress and protein turnover.

It localises to the plastid. The protein localises to the chloroplast. The enzyme catalyses 2 (2R)-3-phosphoglycerate + 2 H(+) = D-ribulose 1,5-bisphosphate + CO2 + H2O. It carries out the reaction D-ribulose 1,5-bisphosphate + O2 = 2-phosphoglycolate + (2R)-3-phosphoglycerate + 2 H(+). RuBisCO catalyzes two reactions: the carboxylation of D-ribulose 1,5-bisphosphate, the primary event in carbon dioxide fixation, as well as the oxidative fragmentation of the pentose substrate in the photorespiration process. Both reactions occur simultaneously and in competition at the same active site. In Zea mays (Maize), this protein is Ribulose bisphosphate carboxylase large chain.